The primary structure comprises 961 residues: Outer capsid protein VP2 (961 aa).

This sequence belongs to the orbivirus VP2 family.

It is found in the virion. Functionally, the VP2 protein is one of the two proteins (with VP5) which constitute the virus particle outer capsid. It is the major target of the host immunogenic response. Responsible for viral attachment to target host cell, probably by binding to sialic acid. This attachment induces virion internalization predominantly through clathrin-dependent endocytosis. In Bluetongue virus 1 (isolate South Africa vaccine) (BTV 1), this protein is Outer capsid protein VP2 (Segment-2).